The primary structure comprises 796 residues: Histone acetyltransferase KAT2B (796 aa).

3 disordered regions span residues 1–32 (MSES…TECS), 77–97 (WKSQ…AEQP), and 371–408 (AGGG…DSKR). Low complexity predominate over residues 10 to 24 (GSPAVGAAGSAPAAP). Positions 81-94 (NPPPTPPPPTPPRA) are enriched in pro residues. Residues 392 to 408 (GEKRKPAEPLSHEDSKR) show a composition bias toward basic and acidic residues. Positions 469 to 617 (LNQKPNKKIL…GATLMGCELN (149 aa)) constitute an N-acetyltransferase domain. The Proton donor/acceptor role is filled by glutamate 536. Residues 540–542 (CAV), 547–553 (QVKGYGT), and 578–581 (YAIG) contribute to the acetyl-CoA site. Residues 687 to 791 (KDPDQLYSTL…KFFYTKIKEA (105 aa)) form the Bromo domain.

This sequence belongs to the acetyltransferase family. GCN5 subfamily.

The protein localises to the nucleus. Its subcellular location is the cytoplasm. It is found in the cytoskeleton. It localises to the microtubule organizing center. The protein resides in the centrosome. The enzyme catalyses L-lysyl-[histone] + acetyl-CoA = N(6)-acetyl-L-lysyl-[histone] + CoA + H(+). It catalyses the reaction L-lysyl-[protein] + acetyl-CoA = N(6)-acetyl-L-lysyl-[protein] + CoA + H(+). It carries out the reaction spermidine + acetyl-CoA = N(8)-acetylspermidine + CoA + H(+). In terms of biological role, functions as a histone acetyltransferase (HAT) to promote transcriptional activation. Has significant histone acetyltransferase activity with core histones (H3 and H4), and also with nucleosome core particles. Has a a strong preference for acetylation of H3 at 'Lys-9' (H3K9ac). Also acetylates non-histone proteins. Involved in heart and limb development by mediating acetylation of tbx5. Also acetylates spermidine. Together with kat2a, required for growth and differentiation of craniofacial cartilage and bone by regulating acetylation of histone H3 at 'Lys-9' (H3K9ac). The sequence is that of Histone acetyltransferase KAT2B from Danio rerio (Zebrafish).